The following is a 276-amino-acid chain: MAAPTQLPETAKPKHSNQSEAGPAPLASPTAPMPRPASHLAPMPSDHPDFRSKSARLRCQPPRTNNCGTFKQPPSVAATSRPKPGNPFLQPPTKGTPPPKKKKKNHTEGCHTHEANPEPNTKHTETEPPIISHCPPPHPGPTATPNLLPCPNPTSSFCQNTRDSPSLPPQRPNMVHIPETPLQRRHSPSQIPIRIPPSPYNLSTAKTYYYLQPPYLPILSHEIHFIVPLLCPYEHHTHNRAARREPATLENNPRHRSIRLNYIPSHHVPHLRRRQF.

Disordered regions lie at residues 1–132 (MAAP…PIIS) and 156–176 (SFCQNTRDSPSLPPQRPNMVH). Residues 106–126 (HTEGCHTHEANPEPNTKHTET) show a composition bias toward basic and acidic residues.

This sequence belongs to the UPF0328 family.

The sequence is that of UPF0328 protein ECU03_0010 from Encephalitozoon cuniculi (strain GB-M1) (Microsporidian parasite).